The chain runs to 58 residues: Small ribosomal subunit protein bS21 (58 aa).

It belongs to the bacterial ribosomal protein bS21 family.

In Latilactobacillus sakei subsp. sakei (strain 23K) (Lactobacillus sakei subsp. sakei), this protein is Small ribosomal subunit protein bS21.